The following is a 240-amino-acid chain: Ubiquinone biosynthesis O-methyltransferase (240 aa).

The S-adenosyl-L-methionine site is built by arginine 36, glycine 60, aspartate 81, and leucine 123.

This sequence belongs to the methyltransferase superfamily. UbiG/COQ3 family.

The catalysed reaction is a 3-demethylubiquinol + S-adenosyl-L-methionine = a ubiquinol + S-adenosyl-L-homocysteine + H(+). It catalyses the reaction a 3-(all-trans-polyprenyl)benzene-1,2-diol + S-adenosyl-L-methionine = a 2-methoxy-6-(all-trans-polyprenyl)phenol + S-adenosyl-L-homocysteine + H(+). Its pathway is cofactor biosynthesis; ubiquinone biosynthesis. Its function is as follows. O-methyltransferase that catalyzes the 2 O-methylation steps in the ubiquinone biosynthetic pathway. This Rickettsia bellii (strain OSU 85-389) protein is Ubiquinone biosynthesis O-methyltransferase.